The chain runs to 341 residues: Probable galacturonosyltransferase-like 2 (341 aa).

Residues 1-4 are Cytoplasmic-facing; that stretch reads MHSK. The chain crosses the membrane as a helical; Signal-anchor for type II membrane protein span at residues 5 to 22; it reads FILYLSILAVFTVSFAGG. The Lumenal segment spans residues 23–341; sequence ERFKEAPKFF…LESRFDLIES (319 aa). N-linked (GlcNAc...) asparagine glycosylation is present at N190.

It belongs to the glycosyltransferase 8 family.

The protein localises to the golgi apparatus membrane. It functions in the pathway glycan metabolism; pectin biosynthesis. Functionally, may be involved in pectin and/or xylans biosynthesis in cell walls. The protein is Probable galacturonosyltransferase-like 2 (GATL2) of Arabidopsis thaliana (Mouse-ear cress).